The sequence spans 541 residues: Chaperonin GroEL (541 aa).

ATP contacts are provided by residues Thr-29–Pro-32, Asp-86–Thr-90, Gly-413, and Asp-494.

The protein belongs to the chaperonin (HSP60) family. In terms of assembly, forms a cylinder of 14 subunits composed of two heptameric rings stacked back-to-back. Interacts with the co-chaperonin GroES.

The protein resides in the cytoplasm. The catalysed reaction is ATP + H2O + a folded polypeptide = ADP + phosphate + an unfolded polypeptide.. Its function is as follows. Together with its co-chaperonin GroES, plays an essential role in assisting protein folding. The GroEL-GroES system forms a nano-cage that allows encapsulation of the non-native substrate proteins and provides a physical environment optimized to promote and accelerate protein folding. The polypeptide is Chaperonin GroEL (Lachnospira eligens (strain ATCC 27750 / DSM 3376 / VPI C15-48 / C15-B4) (Eubacterium eligens)).